The following is a 758-amino-acid chain: Polyribonucleotide nucleotidyltransferase (758 aa).

Residues Asp488 and Asp494 each coordinate Mg(2+). The KH domain occupies 555 to 614 (PKLYTMKINPEKIRDVIGKGGAVIRALTEETGTQINIDEDGTITIASTDSAKADEAKRRI). The region spanning 624 to 692 (GKIYEGPVVK…EKGRVKLSMR (69 aa)) is the S1 motif domain. The disordered stretch occupies residues 692–758 (RALLDRPMGD…AGEHSGQMDA (67 aa)). The segment covering 707–735 (PAERGERGDRGDRGDRPERGERRERREPA) has biased composition (basic and acidic residues). The span at 736-745 (GADQQQQQQQ) shows a compositional bias: low complexity.

The protein belongs to the polyribonucleotide nucleotidyltransferase family. Requires Mg(2+) as cofactor.

It localises to the cytoplasm. The enzyme catalyses RNA(n+1) + phosphate = RNA(n) + a ribonucleoside 5'-diphosphate. Involved in mRNA degradation. Catalyzes the phosphorolysis of single-stranded polyribonucleotides processively in the 3'- to 5'-direction. In Paracidovorax citrulli (strain AAC00-1) (Acidovorax citrulli), this protein is Polyribonucleotide nucleotidyltransferase.